We begin with the raw amino-acid sequence, 639 residues long: Kininogen-1 (639 aa).

Positions 1-18 (MKLITILLLCSRLLPSLA) are cleaved as a signal peptide. Residues 28–132 (CNDESLFQAV…TQICNITPGK (105 aa)) enclose the Cystatin kininogen-type 1 domain. Intrachain disulfides connect C28–C609, C83–C94, C107–C126, C142–C145, C206–C218, C229–C248, C264–C267, C328–C340, and C351–C370. Residue N82 is glycosylated (N-linked (GlcNAc...) asparagine). The region spanning 151-254 (VDSPELGPVL…SDSCEFYPGD (104 aa)) is the Cystatin kininogen-type 2 domain. 2 N-linked (GlcNAc...) asparagine glycosylation sites follow: N169 and N205. The region spanning 273–376 (VDSPELKEAL…TVKCKVLDMT (104 aa)) is the Cystatin kininogen-type 3 domain. A glycan (N-linked (GlcNAc...) asparagine) is linked at N294. Residue S332 is modified to Phosphoserine. 2 disordered regions span residues 438 to 462 (NHQG…GHGH) and 476 to 547 (GYDH…LNPP). Positions 482-502 (PVGHGHGQRHGHGHGHGHGRD) are enriched in basic residues. Basic and acidic residues predominate over residues 503-519 (KHTNKDKNNVKHTDQRR). Positions 522-537 (LTSSSEDNTTSTQIQG) are enriched in polar residues. A glycan (N-linked (GlcNAc...) asparagine) is linked at N529.

Bradykinin is released from kininogen by plasma kallikrein. Post-translationally, phosphorylated by FAM20C in the extracellular medium. In terms of processing, bradykinin is inactivated by ACE, which removes the dipeptide Arg-Phe from its C-terminus. In terms of tissue distribution, plasma.

The protein localises to the secreted. It is found in the extracellular space. Its function is as follows. Kininogens are inhibitors of thiol proteases. HMW-kininogen plays an important role in blood coagulation by helping to position optimally prekallikrein and factor XI next to factor XII; HMW-kininogen inhibits the thrombin- and plasmin-induced aggregation of thrombocytes. LMW-kininogen inhibits the aggregation of thrombocytes. LMW-kininogen is in contrast to HMW-kininogen not involved in blood clotting. The active peptide bradykinin is a potent vasodilatator that is released from HMW-kininogen shows a variety of physiological effects: (A) influence in smooth muscle contraction, (B) induction of hypotension, (C) natriuresis and diuresis, (D) decrease in blood glucose level, (E) it is a mediator of inflammation and causes (E1) increase in vascular permeability, (E2) stimulation of nociceptors (4E3) release of other mediators of inflammation (e.g. prostaglandins), (F) it has a cardioprotective effect (directly via bradykinin action, indirectly via endothelium-derived relaxing factor action). This Rattus norvegicus (Rat) protein is Kininogen-1 (Kng1).